The sequence spans 565 residues: MPQASEHRLGRTREPPVNIQPRVGSKLPFAPRARSKERRNPASGPNPMLRPLPPRPGLPDERLKKLELGRGRTSGPRPRGPLRADHGVPLPGSPPPTVALPLPSRTNLARSKSVSSGDLRPMGIALGGHRGTGELGAALSRLALRPEPPTLRRSTSLRRLGGFPGPPTLFSIRTEPPASHGSFHMISARSSEPFYSDDKMAHHTLLLGSGHVGLRNLGNTCFLNAVLQCLSSTRPLRDFCLRRDFRQEVPGGGRAQELTEAFADVIGALWHPDSCEAVNPTRFRAVFQKYVPSFSGYSQQDAQEFLKLLMERLHLEINRRGRRAPPILANGPVPSPPRRGGALLEEPELSDDDRANLMWKRYLEREDSKIVDLFVGQLKSCLKCQACGYRSTTFEVFCDLSLPIPKKGFAGGKVSLRDCFNLFTKEEELESENAPVCDRCRQKTRSTKKLTVQRFPRILVLHLNRFSASRGSIKKSSVGVDFPLQRLSLGDFASDKAGSPVYQLYALCNHSGSVHYGHYTALCRCQTGWHVYNDSRVSPVSENQVASSEGYVLFYQLMQEPPRCL.

Residues M1 to E14 show a composition bias toward basic and acidic residues. The segment at M1–P103 is disordered. Pro residues predominate over residues M48–G57. The span at L58 to R70 shows a compositional bias: basic and acidic residues. The Nuclear export signal motif lies at E134 to R152. The region spanning V212–M558 is the USP domain. C221 serves as the catalytic Nucleophile. 4 residues coordinate Zn(2+): C384, C387, C437, and C440. H518 serves as the catalytic Proton acceptor.

It belongs to the peptidase C19 family. USP21 subfamily. In terms of assembly, interacts with BEND3. As to expression, highly expressed in heart, pancreas and skeletal muscle. Also expressed in brain, placenta, liver and kidney, and at very low level in lung.

The protein resides in the cytoplasm. The protein localises to the nucleus. The catalysed reaction is Thiol-dependent hydrolysis of ester, thioester, amide, peptide and isopeptide bonds formed by the C-terminal Gly of ubiquitin (a 76-residue protein attached to proteins as an intracellular targeting signal).. Functionally, deubiquitinates histone H2A, a specific tag for epigenetic transcriptional repression, thereby acting as a coactivator. Deubiquitination of histone H2A releaves the repression of di- and trimethylation of histone H3 at 'Lys-4', resulting in regulation of transcriptional initiation. Regulates gene expression via histone H2A deubiquitination. Deubiquitinates BAZ2A/TIP5 leading to its stabilization. Also capable of removing NEDD8 from NEDD8 conjugates but has no effect on Sentrin-1 conjugates. Also acts as a negative regulator of the ribosome quality control (RQC) by mediating deubiquitination of 40S ribosomal proteins RPS10/eS10 and RPS20/uS10, thereby antagonizing ZNF598-mediated 40S ubiquitination. The sequence is that of Ubiquitin carboxyl-terminal hydrolase 21 from Homo sapiens (Human).